Here is a 256-residue protein sequence, read N- to C-terminus: Hydroxyacylglutathione hydrolase (256 aa).

The Zn(2+) site is built by histidine 54, histidine 56, aspartate 58, histidine 59, histidine 113, aspartate 136, and histidine 174.

This sequence belongs to the metallo-beta-lactamase superfamily. Glyoxalase II family. As to quaternary structure, monomer. Requires Zn(2+) as cofactor.

It carries out the reaction an S-(2-hydroxyacyl)glutathione + H2O = a 2-hydroxy carboxylate + glutathione + H(+). It participates in secondary metabolite metabolism; methylglyoxal degradation; (R)-lactate from methylglyoxal: step 2/2. Thiolesterase that catalyzes the hydrolysis of S-D-lactoyl-glutathione to form glutathione and D-lactic acid. This chain is Hydroxyacylglutathione hydrolase, found in Cyanothece sp. (strain PCC 7425 / ATCC 29141).